The chain runs to 1239 residues: DNA-directed RNA polymerase subunit beta (1239 aa).

A disordered region spans residues 1182–1239 (IEGAENQLEDKEEKEEEKEENYKEDSDEYDDLREEDVEPDLEELSLDDLDLDDFGDEH). Acidic residues-rich tracts occupy residues 1191–1200 (DKEEKEEEKE) and 1206–1239 (DSDE…GDEH).

Belongs to the RNA polymerase beta chain family. As to quaternary structure, the RNAP catalytic core consists of 2 alpha, 1 beta, 1 beta' and 1 omega subunit. When a sigma factor is associated with the core the holoenzyme is formed, which can initiate transcription.

It carries out the reaction RNA(n) + a ribonucleoside 5'-triphosphate = RNA(n+1) + diphosphate. Its function is as follows. DNA-dependent RNA polymerase catalyzes the transcription of DNA into RNA using the four ribonucleoside triphosphates as substrates. The chain is DNA-directed RNA polymerase subunit beta from Clostridium botulinum (strain Loch Maree / Type A3).